The sequence spans 270 residues: NAD(P)H-hydrate epimerase (270 aa).

The YjeF N-terminal domain maps to F25–Q234. D73–Q77 is a binding site for (6S)-NADPHX. K(+) contacts are provided by N74 and D144. (6S)-NADPHX contacts are provided by residues G148–H154 and E177. T180 is a K(+) binding site.

The protein belongs to the NnrE/AIBP family. K(+) is required as a cofactor.

The enzyme catalyses (6R)-NADHX = (6S)-NADHX. The catalysed reaction is (6R)-NADPHX = (6S)-NADPHX. In terms of biological role, catalyzes the epimerization of the S- and R-forms of NAD(P)HX, a damaged form of NAD(P)H that is a result of enzymatic or heat-dependent hydration. This is a prerequisite for the S-specific NAD(P)H-hydrate dehydratase to allow the repair of both epimers of NAD(P)HX. This chain is NAD(P)H-hydrate epimerase, found in Legionella pneumophila (strain Corby).